Reading from the N-terminus, the 339-residue chain is Protein H339R (339 aa).

It belongs to the asfivirus H339R family. As to quaternary structure, interacts with host NACA (alpha chain of nascent polypeptide-associated complex).

The protein localises to the host cytoplasm. It is found in the host nucleus. This African swine fever virus (isolate Tick/Malawi/Lil 20-1/1983) (ASFV) protein is Protein H339R.